A 374-amino-acid chain; its full sequence is Aminomethyltransferase (374 aa).

This sequence belongs to the GcvT family. The glycine cleavage system is composed of four proteins: P, T, L and H.

The catalysed reaction is N(6)-[(R)-S(8)-aminomethyldihydrolipoyl]-L-lysyl-[protein] + (6S)-5,6,7,8-tetrahydrofolate = N(6)-[(R)-dihydrolipoyl]-L-lysyl-[protein] + (6R)-5,10-methylene-5,6,7,8-tetrahydrofolate + NH4(+). The glycine cleavage system catalyzes the degradation of glycine. In Caldanaerobacter subterraneus subsp. tengcongensis (strain DSM 15242 / JCM 11007 / NBRC 100824 / MB4) (Thermoanaerobacter tengcongensis), this protein is Aminomethyltransferase.